The chain runs to 34 residues: MSDINTARLPFFQPPEFRPPCVGDDIEMVLTRGE.

A propeptide spanning residues 1 to 10 (MSDINTARLP) is cleaved from the precursor. A cross-link (cyclopeptide (Phe-Pro)) is located at residues 11–20 (FFQPPEFRPP). Residues 21-34 (CVGDDIEMVLTRGE) constitute a propeptide that is removed on maturation.

Belongs to the MSDIN fungal toxin family. Processed by the macrocyclase-peptidase enzyme POPB to yield a toxic cyclic decapeptide. POPB first removes 10 residues from the N-terminus. Conformational trapping of the remaining peptide forces the enzyme to release this intermediate rather than proceed to macrocyclization. The enzyme rebinds the remaining peptide in a different conformation and catalyzes macrocyclization of the N-terminal 10 residues.

In terms of biological role, probable toxin that belongs to the MSDIN-like toxin family responsible for a large number of food poisoning cases and deaths. The chain is MSDIN-like toxin proprotein 3 from Amanita bisporigera (Destroying angel).